Consider the following 143-residue polypeptide: Large ribosomal subunit protein uL13 (143 aa).

The protein belongs to the universal ribosomal protein uL13 family. Part of the 50S ribosomal subunit.

In terms of biological role, this protein is one of the early assembly proteins of the 50S ribosomal subunit, although it is not seen to bind rRNA by itself. It is important during the early stages of 50S assembly. The chain is Large ribosomal subunit protein uL13 from Neisseria meningitidis serogroup C (strain 053442).